The primary structure comprises 122 residues: Small ribosomal subunit protein uS13 (122 aa).

The tract at residues 94–122 (GLPVRGQSTQKNARTRKGPRKTVAGKKGK) is disordered. Residues 106 to 122 (ARTRKGPRKTVAGKKGK) are compositionally biased toward basic residues.

The protein belongs to the universal ribosomal protein uS13 family. Part of the 30S ribosomal subunit. Forms a loose heterodimer with protein S19. Forms two bridges to the 50S subunit in the 70S ribosome.

Located at the top of the head of the 30S subunit, it contacts several helices of the 16S rRNA. In the 70S ribosome it contacts the 23S rRNA (bridge B1a) and protein L5 of the 50S subunit (bridge B1b), connecting the 2 subunits; these bridges are implicated in subunit movement. Contacts the tRNAs in the A and P-sites. This is Small ribosomal subunit protein uS13 from Mycoplasmopsis synoviae (strain 53) (Mycoplasma synoviae).